The primary structure comprises 177 residues: Large ribosomal subunit protein uL6 (177 aa).

Belongs to the universal ribosomal protein uL6 family. Part of the 50S ribosomal subunit.

Functionally, this protein binds to the 23S rRNA, and is important in its secondary structure. It is located near the subunit interface in the base of the L7/L12 stalk, and near the tRNA binding site of the peptidyltransferase center. The chain is Large ribosomal subunit protein uL6 from Pectobacterium carotovorum subsp. carotovorum (strain PC1).